The sequence spans 273 residues: 3-((Z)-2-isocyanoethenyl)-1H-indole synthase (273 aa).

The Fe cation site is built by His105, Asp107, and His254.

This sequence belongs to the TfdA dioxygenase family. It depends on Fe(2+) as a cofactor.

The enzyme catalyses (2S)-3-(1H-indol-3-yl)-2-isocyanopropanoate + 2-oxoglutarate + O2 + H(+) = 3-[(Z)-2-isocyanoethenyl]-1H-indole + succinate + 2 CO2 + H2O. Functionally, involved in the biosynthesis of ambiguines, a family of hapalindole-type alkaloids. Responsible for the synthesis of Z-3-(2-isocyanoethen)-indole, a biosynthetic precursor to all ambiguines. The protein is 3-((Z)-2-isocyanoethenyl)-1H-indole synthase of Fischerella ambigua (strain UTEX 1903).